We begin with the raw amino-acid sequence, 428 residues long: Folylpolyglutamate synthase (428 aa).

49-52 serves as a coordination point for ATP; the sequence is GKGS. Serine 73 contacts Mg(2+). Phenylalanine 75 and arginine 82 together coordinate (6R)-5,10-methylenetetrahydrofolyl-(gamma-L-Glu)n. Mg(2+)-binding residues include glutamate 143 and histidine 170. Lysine 185 bears the N6-carboxylysine mark. ATP contacts are provided by residues asparagine 264, arginine 300, and 313-316; that span reads DGAH. Serine 417 is a (6R)-5,10-methylenetetrahydrofolyl-(gamma-L-Glu)n binding site.

This sequence belongs to the folylpolyglutamate synthase family. As to quaternary structure, monomer. It depends on Mg(2+) as a cofactor.

It catalyses the reaction (6S)-5,6,7,8-tetrahydrofolyl-(gamma-L-Glu)(n) + L-glutamate + ATP = (6S)-5,6,7,8-tetrahydrofolyl-(gamma-L-Glu)(n+1) + ADP + phosphate + H(+). It carries out the reaction (6R)-5,10-methylenetetrahydrofolyl-(gamma-L-Glu)(n) + L-glutamate + ATP = (6R)-5,10-methylenetetrahydrofolyl-(gamma-L-Glu)(n+1) + ADP + phosphate + H(+). The catalysed reaction is 10-formyltetrahydrofolyl-(gamma-L-Glu)(n) + L-glutamate + ATP = 10-formyltetrahydrofolyl-(gamma-L-Glu)(n+1) + ADP + phosphate + H(+). With respect to regulation, competitively inhibited by adenosine 5'-(3-thio)triphosphate and beta,gamma-methylene-ATP. Functionally, involved in the conversion of folates to polyglutamate derivatives, and likely functions in the retention of cellular folate pools. Catalyzes successive MgATP-dependent additions of glutamate to a pteroylmonoglutamate substrate, with a high preference for 5,10-methylenetetrahydrofolate (mTHF). Thus, metabolizes mTHF to the tetraglutamate derivative, but longer glutamate chain length products are not observed. Tetrahydrofolate (H4PteGlu) and 10-formyl-H4PteGlu are poorer folate substrates. In contrast to E.coli FolC, this enzyme does not display dihydrofolate synthase activity. This chain is Folylpolyglutamate synthase, found in Lacticaseibacillus casei (Lactobacillus casei).